The following is a 506-amino-acid chain: Cytochrome P450 monooxygenase atr2 (506 aa).

Residues 18–38 (VFAGLVLASLLTTTYCIWNIF) form a helical membrane-spanning segment. Cysteine 451 provides a ligand contact to heme.

Belongs to the cytochrome P450 family. Requires heme as cofactor.

The protein resides in the membrane. The enzyme catalyses 4-O-demethylbarbatate + reduced [NADPH--hemoprotein reductase] + O2 = proatranorin II + oxidized [NADPH--hemoprotein reductase] + H2O + H(+). The catalysed reaction is proatranorin II + reduced [NADPH--hemoprotein reductase] + O2 = proatranorin III + oxidized [NADPH--hemoprotein reductase] + 2 H2O + H(+). It catalyses the reaction proatranorin I + reduced [NADPH--hemoprotein reductase] + O2 = proatranorin IV + oxidized [NADPH--hemoprotein reductase] + H2O + H(+). It carries out the reaction proatranorin IV + reduced [NADPH--hemoprotein reductase] + O2 = atranorin + oxidized [NADPH--hemoprotein reductase] + 2 H2O + H(+). Its pathway is secondary metabolite biosynthesis; terpenoid biosynthesis. In terms of biological role, cytochrome P450 monooxygenase; part of the gene cluster that mediates the biosynthesis of atranorin, a depside of polyketide origin that accumulates in the cortical or medullary layers of lichen thalli. Atr2 performs the oxidation at the C-9 position of 4-O-demethylbarbatic acid to yield proatranorin III via proatranorin II. Atr2 is also able to oxidize the atr3 product proatranorin I to produce the final compound atranorin. The first step in the pathway is performed by the non-reducing polyketide synthase atr1 that produces 4-O-demethylbarbatic acid composed of two 3-methylorsellinic acid (3MOA) moieties. The pathway continues with the actions of the cytochrome P450 monooygenase atr2 that catalizes the oxidation of c-9 and the O-methyltransferase atr3 that performs the methylation of the carboxyl group to yield atranorin, via the proatranorin II and III intermediates if atr2 acts first, or the proatranorin I intermediate if atr3 acts first. The chain is Cytochrome P450 monooxygenase atr2 from Stereocaulon alpinum (Alpine snow lichen).